Reading from the N-terminus, the 232-residue chain is Cytidylate kinase (232 aa).

Residue 10 to 18 (GPAASGKST) participates in ATP binding.

This sequence belongs to the cytidylate kinase family. Type 1 subfamily.

It is found in the cytoplasm. The enzyme catalyses CMP + ATP = CDP + ADP. The catalysed reaction is dCMP + ATP = dCDP + ADP. The protein is Cytidylate kinase of Phytoplasma mali (strain AT).